A 164-amino-acid polypeptide reads, in one-letter code: Hydrogenase 2 maturation protease (164 aa).

Ni(2+) contacts are provided by Glu-16, Asp-62, and His-93.

The protein belongs to the peptidase A31 family. Ni(2+) serves as cofactor.

In terms of biological role, protease involved in the C-terminal processing of HybC, the large subunit of hydrogenase 2. Specifically cleaves off a 15 amino acid peptide from the C-terminus of the precursor of HybC. The sequence is that of Hydrogenase 2 maturation protease (hybD) from Escherichia coli (strain K12).